A 280-amino-acid chain; its full sequence is Purine nucleoside phosphorylase (280 aa).

Phosphate is bound by residues serine 15 and 55-56 (RH). A substrate-binding site is contributed by methionine 194. Threonine 195 serves as a coordination point for phosphate. Position 218-220 (218-220 (DLD)) interacts with substrate.

Belongs to the PNP/MTAP phosphorylase family. MTAP subfamily. In terms of assembly, homohexamer. Dimer of a homotrimer.

It catalyses the reaction a purine D-ribonucleoside + phosphate = a purine nucleobase + alpha-D-ribose 1-phosphate. The protein operates within purine metabolism; purine nucleoside salvage. In terms of biological role, purine nucleoside phosphorylase involved in purine salvage. The protein is Purine nucleoside phosphorylase of Streptomyces coelicolor (strain ATCC BAA-471 / A3(2) / M145).